The following is a 195-amino-acid chain: Cytochrome c oxidase subunit 1 (195 aa).

Residues 12–32 traverse the membrane as a helical segment; the sequence is MYWVLGFIFLFTLGGLTGIVL. Residues H42 and D43 each contribute to the Mg(2+) site. Residue H50 participates in heme a3 binding. H52 contacts Fe(II)-heme a. 3 helical membrane passes run 59–79, 88–108, and 131–151; these read AVFA…GLVL, FIVM…LGLA, and GSLM…EAFL.

This sequence belongs to the heme-copper respiratory oxidase family. As to quaternary structure, component of the cytochrome c oxidase (complex IV, CIV), a multisubunit enzyme composed of a catalytic core of 3 subunits and several supernumerary subunits. The complex exists as a monomer or a dimer and forms supercomplexes (SCs) in the inner mitochondrial membrane with ubiquinol-cytochrome c oxidoreductase (cytochrome b-c1 complex, complex III, CIII). Heme is required as a cofactor. Requires Cu cation as cofactor.

Its subcellular location is the mitochondrion inner membrane. It catalyses the reaction 4 Fe(II)-[cytochrome c] + O2 + 8 H(+)(in) = 4 Fe(III)-[cytochrome c] + 2 H2O + 4 H(+)(out). It participates in energy metabolism; oxidative phosphorylation. Component of the cytochrome c oxidase, the last enzyme in the mitochondrial electron transport chain which drives oxidative phosphorylation. The respiratory chain contains 3 multisubunit complexes succinate dehydrogenase (complex II, CII), ubiquinol-cytochrome c oxidoreductase (cytochrome b-c1 complex, complex III, CIII) and cytochrome c oxidase (complex IV, CIV), that cooperate to transfer electrons derived from NADH and succinate to molecular oxygen, creating an electrochemical gradient over the inner membrane that drives transmembrane transport and the ATP synthase. Cytochrome c oxidase is the component of the respiratory chain that catalyzes the reduction of oxygen to water. Electrons originating from reduced cytochrome c in the intermembrane space (IMS) are transferred via the dinuclear copper A center (CU(A)) of subunit 2 and heme A of subunit 1 to the active site in subunit 1, a binuclear center (BNC) formed by heme A3 and copper B (CU(B)). The BNC reduces molecular oxygen to 2 water molecules using 4 electrons from cytochrome c in the IMS and 4 protons from the mitochondrial matrix. This chain is Cytochrome c oxidase subunit 1 (COI), found in Albinaria turrita (Door snail).